The primary structure comprises 123 residues: Methicillin resistance regulatory protein MecI (123 aa).

The segment at residues 7–71 (EISSAEWEVM…KDNKIFQYYS (65 aa)) is a DNA-binding region (H-T-H motif). The important for dimerization stretch occupies residues 74–123 (EESDIKYKTSKNFINKVYKGGFNSLVLNFVEKEDLSQDEIEELRNILNKK).

It belongs to the BlaI transcriptional regulatory family. Monomer and homodimer. In terms of processing, upon exposure to beta-lactams, proteolytic cleavage at a single site impairs dimerization and abolishes repressor activity.

Its subcellular location is the cytoplasm. Functionally, transcriptional repressor that constitutively blocks the transcription of the gene for the penicillin-binding protein MecA. Binds palindromic DNA with the sequence 5'-TACA-[AT]-N-TGTA-3'. Regulates genes involved in antibiotic resistance. Binds DNA as a dimer. The chain is Methicillin resistance regulatory protein MecI (mecI) from Staphylococcus aureus (strain N315).